Consider the following 140-residue polypeptide: Putative pre-16S rRNA nuclease (140 aa).

Belongs to the YqgF nuclease family.

It is found in the cytoplasm. In terms of biological role, could be a nuclease involved in processing of the 5'-end of pre-16S rRNA. This is Putative pre-16S rRNA nuclease from Mannheimia succiniciproducens (strain KCTC 0769BP / MBEL55E).